Reading from the N-terminus, the 326-residue chain is Beta-ketoacyl-[acyl-carrier-protein] synthase III (326 aa).

Residues cysteine 111 and histidine 252 contribute to the active site. Residues 253-257 are ACP-binding; it reads QANIR. Residue asparagine 282 is part of the active site.

Belongs to the thiolase-like superfamily. FabH family. Homodimer.

Its subcellular location is the plastid. The protein localises to the chloroplast. The catalysed reaction is malonyl-[ACP] + acetyl-CoA + H(+) = 3-oxobutanoyl-[ACP] + CO2 + CoA. The protein operates within lipid metabolism; fatty acid biosynthesis. In terms of biological role, catalyzes the condensation reaction of fatty acid synthesis by the addition to an acyl acceptor of two carbons from malonyl-ACP. Catalyzes the first condensation reaction which initiates fatty acid synthesis and may therefore play a role in governing the total rate of fatty acid production. Possesses both acetoacetyl-ACP synthase and acetyl transacylase activities. Its substrate specificity determines the biosynthesis of branched-chain and/or straight-chain of fatty acids. This Porphyra purpurea (Red seaweed) protein is Beta-ketoacyl-[acyl-carrier-protein] synthase III.